The following is a 187-amino-acid chain: Ribosome hibernation promotion factor (187 aa).

This sequence belongs to the HPF/YfiA ribosome-associated protein family. Long HPF subfamily. In terms of assembly, interacts with 100S ribosomes.

The protein localises to the cytoplasm. Its function is as follows. Involved in 100S ribosome formation from 70S ribosomes; 100S ribosomes are probably translationally inactive. Ribosome hibernation may be used by the cell to decrease overall energy consumption under nutrient-limiting conditions. Unlike E.coli, 100S ribosomes are present from mid-exponential growth, peak during the transition from log to stationary phase and then decrease. This is Ribosome hibernation promotion factor from Listeria monocytogenes serotype 1/2a (strain 10403S).